We begin with the raw amino-acid sequence, 601 residues long: Membrane protein insertase YidC (601 aa).

The chain crosses the membrane as a helical span at residues 10-30 (ISISLVILVLFQVIASYVLPP). Residues 34 to 63 (APPHPATQTAQTQPVSGQPAPGVPAPSAVP) are disordered. A compositionally biased stretch (low complexity) spans 39 to 53 (ATQTAQTQPVSGQPA). Pro residues predominate over residues 54-63 (PGVPAPSAVP). Helical transmembrane passes span 382-404 (FGNM…FPLV), 455-475 (LPML…FISI), 510-530 (ALSP…TMWG), and 549-569 (FMPV…VLYY).

The protein belongs to the OXA1/ALB3/YidC family. Type 1 subfamily. As to quaternary structure, interacts with the Sec translocase complex via SecD. Specifically interacts with transmembrane segments of nascent integral membrane proteins during membrane integration.

Its subcellular location is the cell inner membrane. In terms of biological role, required for the insertion and/or proper folding and/or complex formation of integral membrane proteins into the membrane. Involved in integration of membrane proteins that insert both dependently and independently of the Sec translocase complex, as well as at least some lipoproteins. Aids folding of multispanning membrane proteins. The polypeptide is Membrane protein insertase YidC (Acidiphilium cryptum (strain JF-5)).